The primary structure comprises 157 residues: Phosphopantetheine adenylyltransferase (157 aa).

A substrate-binding site is contributed by Ser9. Residues 9 to 10 and His17 each bind ATP; that span reads SF. Residues Lys41, Val73, and Lys87 each coordinate substrate. Residues 88–90, Glu98, and 122–128 each bind ATP; these read GLR and YSFVSSS.

This sequence belongs to the bacterial CoaD family. Homohexamer. It depends on Mg(2+) as a cofactor.

The protein resides in the cytoplasm. It catalyses the reaction (R)-4'-phosphopantetheine + ATP + H(+) = 3'-dephospho-CoA + diphosphate. It functions in the pathway cofactor biosynthesis; coenzyme A biosynthesis; CoA from (R)-pantothenate: step 4/5. In terms of biological role, reversibly transfers an adenylyl group from ATP to 4'-phosphopantetheine, yielding dephospho-CoA (dPCoA) and pyrophosphate. This is Phosphopantetheine adenylyltransferase from Mycobacterium marinum (strain ATCC BAA-535 / M).